The following is a 784-amino-acid chain: Probable aminopeptidase 1 (784 aa).

Residues E103 and 236 to 240 (GAMEN) contribute to the substrate site. Position 271 (H271) interacts with Zn(2+). Residue E272 is the Proton acceptor of the active site. Positions 275 and 294 each coordinate Zn(2+).

This sequence belongs to the peptidase M1 family. Zn(2+) serves as cofactor.

The protein localises to the cytoplasm. The polypeptide is Probable aminopeptidase 1 (ape1) (Saccharolobus solfataricus (strain ATCC 35092 / DSM 1617 / JCM 11322 / P2) (Sulfolobus solfataricus)).